The following is a 29-amino-acid chain: Brevinin-2Ed (29 aa).

C23 and C29 are joined by a disulfide.

Belongs to the frog skin active peptide (FSAP) family. Brevinin subfamily. As to expression, expressed by the skin glands.

The protein localises to the secreted. Its function is as follows. Shows antibacterial activity against representative Gram-negative and Gram-positive bacterial species, and hemolytic activity. In Pelophylax lessonae (Pool frog), this protein is Brevinin-2Ed.